The chain runs to 416 residues: Gamma-glutamyl phosphate reductase (416 aa).

This sequence belongs to the gamma-glutamyl phosphate reductase family.

It localises to the cytoplasm. It carries out the reaction L-glutamate 5-semialdehyde + phosphate + NADP(+) = L-glutamyl 5-phosphate + NADPH + H(+). Its pathway is amino-acid biosynthesis; L-proline biosynthesis; L-glutamate 5-semialdehyde from L-glutamate: step 2/2. Its function is as follows. Catalyzes the NADPH-dependent reduction of L-glutamate 5-phosphate into L-glutamate 5-semialdehyde and phosphate. The product spontaneously undergoes cyclization to form 1-pyrroline-5-carboxylate. In Leptospira borgpetersenii serovar Hardjo-bovis (strain JB197), this protein is Gamma-glutamyl phosphate reductase.